We begin with the raw amino-acid sequence, 915 residues long: Kinesin-like protein KIN-10A (915 aa).

Residues 1 to 16 (MAPPTPSPRPGPPPTP) are compositionally biased toward pro residues. 2 disordered regions span residues 1-28 (MAPPTPSPRPGPPPTPQAAMTTPLKTPA) and 34-53 (HFPAMTPRNGGGGGAAAGGT). One can recognise a Kinesin motor domain in the interval 56–391 (PVEVIGRIRN…LEYGAKAKCI (336 aa)). Position 137 to 144 (137 to 144 (GPTGSGKS)) interacts with ATP. The stretch at 426–517 (NLQKENKLRE…QRLKEVEREK (92 aa)) forms a coiled coil. The tract at residues 676–718 (PAKKAFGDENNEPAKQTFGDENKQQPAKRVFGDENKDPSAWGA) is disordered.

Belongs to the TRAFAC class myosin-kinesin ATPase superfamily. Kinesin family. KIN-10 subfamily.

The sequence is that of Kinesin-like protein KIN-10A from Oryza sativa subsp. japonica (Rice).